Reading from the N-terminus, the 262-residue chain is Polyamine aminopropyltransferase (262 aa).

The PABS domain occupies 1–249; that stretch reads MWITQEITPY…DIHRAAFALP (249 aa). Asparagine 29 contacts S-methyl-5'-thioadenosine. Aspartate 83 is a binding site for spermidine. Aspartate 155 serves as the catalytic Proton acceptor.

The protein belongs to the spermidine/spermine synthase family. In terms of assembly, homodimer or homotetramer.

The protein localises to the cytoplasm. The enzyme catalyses S-adenosyl 3-(methylsulfanyl)propylamine + putrescine = S-methyl-5'-thioadenosine + spermidine + H(+). It participates in amine and polyamine biosynthesis; spermidine biosynthesis; spermidine from putrescine: step 1/1. In terms of biological role, catalyzes the irreversible transfer of a propylamine group from the amino donor S-adenosylmethioninamine (decarboxy-AdoMet) to putrescine (1,4-diaminobutane) to yield spermidine. The polypeptide is Polyamine aminopropyltransferase (Helicobacter acinonychis (strain Sheeba)).